The chain runs to 360 residues: POU domain, class 5, transcription factor 1 (360 aa).

Disordered stretches follow at residues 1 to 50 (MAGH…IGPG) and 87 to 118 (QGGL…CAAP). Positions 4–12 (HLASDFAFS) match the 9aaTAD motif. Over residues 41–50 (PPGGSGIGPG) the composition is skewed to gly residues. Residue Ser-111 is modified to Phosphoserine; by MAPK. A Glycyl lysine isopeptide (Lys-Gly) (interchain with G-Cter in SUMO) cross-link involves residue Lys-123. Residues 138-212 (DIKALQKDLE…LLQKWVEEAD (75 aa)) enclose the POU-specific domain. Residues Arg-157 and Gln-164 each contribute to the DNA site. 2 DNA-binding regions span residues 180 to 186 (SQTTICR) and 193 to 196 (SFKN). The segment at residues 230–289 (RKRKRTSIENRVRGNLESMFLQCPKPTLQQISHIAQQLGLEKDVVRVWFCNRRQKGKRSS) is a DNA-binding region (homeobox). The residue at position 235 (Thr-235) is a Phosphothreonine. 3 positions are modified to phosphoserine: Ser-236, Ser-289, and Ser-290. The segment at 287–316 (RSSSDYSQREDFEAAGSPFPGGPVSFPLAP) is disordered. Positions 302–313 (GSPFPGGPVSFP) are enriched in low complexity. Ser-355 is modified (phosphoserine).

It belongs to the POU transcription factor family. Class-5 subfamily. In terms of assembly, interacts with PKM. Interacts with WWP2. Interacts with UBE2I and ZSCAN10. Interacts with PCGF1. Interacts with ESRRB; recruits ESRRB near the POU5F1-SOX2 element in the NANOG proximal promoter; the interaction is DNA independent. Interacts with ZNF322. Interacts with MAPK8 and MAPK9; the interaction allows MAPK8 and MAPK9 to phosphorylate POU5F1 on Ser-355. Interacts (when phosphorylated on Ser-355) with FBXW8. Interacts with FBXW4. Interacts with SOX2 and SOX15; binds synergistically with either SOX2 or SOX15 to DNA. Interacts with DDX56. Sumoylation enhances the protein stability, DNA binding and transactivation activity. Sumoylation is required for enhanced YES1 expression. In terms of processing, ubiquitinated; undergoes 'Lys-63'-linked polyubiquitination by WWP2 leading to proteasomal degradation. Post-translationally, ERK1/2-mediated phosphorylation at Ser-111 promotes nuclear exclusion and proteasomal degradation. Phosphorylation at Thr-235 and Ser-236 decrease DNA-binding and alters ability to activate transcription.

The protein resides in the cytoplasm. The protein localises to the nucleus. In terms of biological role, transcription factor that binds to the octamer motif (5'-ATTTGCAT-3'). Forms a trimeric complex with SOX2 or SOX15 on DNA and controls the expression of a number of genes involved in embryonic development such as YES1, FGF4, UTF1 and ZFP206. Critical for early embryogenesis and for embryonic stem cell pluripotency. This chain is POU domain, class 5, transcription factor 1 (POU5F1), found in Sus scrofa (Pig).